A 475-amino-acid chain; its full sequence is Actin-related protein 10 (475 aa).

It belongs to the actin family.

It is found in the cytoplasm. The protein resides in the cytoskeleton. The polypeptide is Actin-related protein 10 (Dictyostelium discoideum (Social amoeba)).